Here is a 480-residue protein sequence, read N- to C-terminus: RAC-alpha serine/threonine-protein kinase (480 aa).

Residues 5 to 108 enclose the PH domain; it reads AIVKEGWLHK…WTTAIQTVAD (104 aa). An N6-acetyllysine mark is found at Lys14 and Lys20. 14–19 contributes to the 1D-myo-inositol 1,3,4,5-tetrakisphosphate binding site; it reads KRGEYI. 1D-myo-inositol 1,3,4,5-tetrakisphosphate contacts are provided by residues 23-25 and Asn53; that span reads RPR. A disulfide bridge connects residues Cys60 and Cys77. 1D-myo-inositol 1,3,4,5-tetrakisphosphate is bound at residue Arg86. Residue Ser124 is modified to Phosphoserine. Ser129 is subject to Phosphoserine; alternate. Residue Ser129 is glycosylated (O-linked (GlcNAc) serine; alternate). A Protein kinase domain is found at 150-408; sequence FEYLKLLGKG…AKEIMQHRFF (259 aa). 156–164 serves as a coordination point for ATP; sequence LGKGTFGKV. Tyr176 carries the post-translational modification Phosphotyrosine; by TNK2. Residue Lys179 participates in ATP binding. Asp274 functions as the Proton acceptor in the catalytic mechanism. Residue Lys284 forms a Glycyl lysine isopeptide (Lys-Gly) (interchain with G-Cter in ubiquitin) linkage. Cys296 and Cys310 are oxidised to a cystine. Thr305 is a glycosylation site (O-linked (GlcNAc) threonine). Position 308 is a phosphothreonine; by PDPK1 (Thr308). The O-linked (GlcNAc) threonine glycan is linked to Thr312. Residues 409 to 480 enclose the AGC-kinase C-terminal domain; sequence ASIVWQDVYE…QFSYSASATA (72 aa). The residue at position 448 (Thr448) is a Phosphothreonine. A Phosphothreonine; by MTOR modification is found at Thr450. The tract at residues 450-480 is disordered; that stretch reads TPPDQDDSMEGVDSERRPHFPQFSYSASATA. An O-linked (GlcNAc) serine; alternate glycan is attached at Ser473. Residue Ser473 is modified to Phosphoserine; by MTOR; alternate. Tyr474 is modified (phosphotyrosine). Ser477 carries the phosphoserine modification. Position 479 is a phosphothreonine (Thr479).

This sequence belongs to the protein kinase superfamily. AGC Ser/Thr protein kinase family. RAC subfamily. Interacts (via the C-terminus) with CCDC88A (via its C-terminus) and THEM4 (via its C-terminus). Interacts with AKTIP. Interacts (via PH domain) with MTCP1, TCL1A and TCL1B. Interacts with TRAF6. Interacts with GRB10; the interaction leads to GRB10 phosphorylation thus promoting YWHAE binding. Interacts with RARA; the interaction phosphorylates RARA and represses its transactivation activity. Interacts with MAP3K5 and TNK2. Interacts with BAD, CLK2, PPP2R5B, STK3 and STK4. Interacts (via PH domain) with SIRT1. Interacts with SRPK2 in a phosphorylation-dependent manner. Interacts with RAF1. Interacts with PKN2 (via C-terminal domain); the interaction occurs with the C-terminus cleavage products of PKN2 in apoptotic cells. Interacts with TRIM13; the interaction ubiquitinates AKT1 leading to its proteasomal degradation. Interacts with and phosphorylated by PDPK1. Interacts with BTBD10. Interacts with KCTD20. Interacts with PA2G4. Interacts with PA2G4. Interacts with KIF14; the interaction is detected in the plasma membrane upon INS stimulation and promotes AKT1 phosphorylation. Interacts with FAM83B; activates the PI3K/AKT signaling cascade. Interacts with WDFY2 (via WD repeats 1-3). Forms a complex with WDFY2 and FOXO1. Interacts with FAM168A. Interacts with SYAP1 (via phosphorylated form and BSD domain); this interaction is enhanced in a mTORC2-mediated manner in response to epidermal growth factor (EGF) stimulation and activates AKT1. Interacts with PKHM3. Interacts with FKBP5/FKBP51; promoting interaction between Akt/AKT1 and PHLPP1, thereby enhancing dephosphorylation and subsequent activation of Akt/AKT1. Interacts with TMEM175; leading to formation of the lysoK(GF) complex. In terms of processing, O-GlcNAcylation at Thr-305 and Thr-312 inhibits activating phosphorylation at Thr-308 via disrupting the interaction between AKT1 and PDPK1. O-GlcNAcylation at Ser-473 also probably interferes with phosphorylation at this site. Phosphorylation on Thr-308, Ser-473 and Tyr-474 is required for full activity. Phosphorylation of the activation loop at Thr-308 by PDPK1/PDK1 is a prerequisite for full activation. Phosphorylation by mTORC2 in response to growth factors plays a key role in AKT1 activation: mTORC2 phosphorylates different sites depending on the context, such as Thr-450, Ser-473, Ser-477 or Thr-479, thereby facilitating subsequent phosphorylation of the activation loop by PDPK1/PDK1. Phosphorylation at Ser-473 by mTORC2 promotes ubiquitination and degradation by the proteasome. Also phosphorylated at Ser-477 and Thr-479 by CDK2, facilitating subsequent phosphorylation of the activation loop by PDPK1/PDK1. Activated TNK2 phosphorylates it on Tyr-176 resulting in its binding to the anionic plasma membrane phospholipid PA. This phosphorylated form localizes to the cell membrane, where it is targeted by PDPK1 and PDPK2 for further phosphorylations on Thr-308 and Ser-473 leading to its activation. Phosphorylated at Thr-308 and Ser-473 by IKBKE and TBK1. Ser-473 phosphorylation is enhanced by interaction with AGAP2 isoform 2 (PIKE-A). Ser-473 phosphorylation is enhanced by signaling through activated FLT3. Ser-473 is dephosphorylated by PHLPP. Dephosphorylated at Thr-308 and Ser-473 by PP2A phosphatase. The phosphorylated form of PPP2R5B is required for bridging AKT1 with PP2A phosphatase. Ser-473 is dephosphorylated by CPPED1, leading to termination of signaling. AIM2 acts as an inhibitor of AKT1 by inhibiting phosphorylation Ser-473: AIM2 acts both by inhibiting the activity of PRKDC/DNA-PK kinase and promoting dephosphorylation by PP2A phosphatase. Post-translationally, ubiquitinated; undergoes both 'Lys-48'- and 'Lys-63'-linked polyubiquitination. TRAF6-induced 'Lys-63'-linked AKT1 ubiquitination is critical for phosphorylation and activation. When ubiquitinated, it translocates to the plasma membrane, where it becomes phosphorylated. When fully phosphorylated and translocated into the nucleus, undergoes 'Lys-48'-polyubiquitination catalyzed by TTC3, leading to its degradation by the proteasome. Ubiquitinated via 'Lys-48'-linked polyubiquitination by ZNRF1, leading to its degradation by the proteasome. Also ubiquitinated by TRIM13 leading to its proteasomal degradation. Phosphorylated, undergoes 'Lys-48'-linked polyubiquitination preferentially at Lys-284 catalyzed by MUL1, leading to its proteasomal degradation. In terms of processing, acetylated on Lys-14 and Lys-20 by the histone acetyltransferases EP300 and KAT2B. Acetylation results in reduced phosphorylation and inhibition of activity. Deacetylated at Lys-14 and Lys-20 by SIRT1. SIRT1-mediated deacetylation relieves the inhibition. Cleavage by caspase-3/CASP3. Cleaved at the caspase-3 consensus site Asp-462 during apoptosis, resulting in down-regulation of the AKT signaling pathway and decreased cell survival.

Its subcellular location is the cytoplasm. It is found in the nucleus. The protein resides in the cell membrane. The protein localises to the mitochondrion intermembrane space. The catalysed reaction is L-seryl-[protein] + ATP = O-phospho-L-seryl-[protein] + ADP + H(+). It carries out the reaction L-threonyl-[protein] + ATP = O-phospho-L-threonyl-[protein] + ADP + H(+). AKT1 is one of 3 closely related serine/threonine-protein kinases (AKT1, AKT2 and AKT3) called the AKT kinase, and which regulate many processes including metabolism, proliferation, cell survival, growth and angiogenesis. This is mediated through serine and/or threonine phosphorylation of a range of downstream substrates. Over 100 substrate candidates have been reported so far, but for most of them, no isoform specificity has been reported. AKT is responsible of the regulation of glucose uptake by mediating insulin-induced translocation of the SLC2A4/GLUT4 glucose transporter to the cell surface. Phosphorylation of PTPN1 at 'Ser-50' negatively modulates its phosphatase activity preventing dephosphorylation of the insulin receptor and the attenuation of insulin signaling. Phosphorylation of TBC1D4 triggers the binding of this effector to inhibitory 14-3-3 proteins, which is required for insulin-stimulated glucose transport. AKT also regulates the storage of glucose in the form of glycogen by phosphorylating GSK3A at 'Ser-21' and GSK3B at 'Ser-9', resulting in inhibition of its kinase activity. Phosphorylation of GSK3 isoforms by AKT is also thought to be one mechanism by which cell proliferation is driven. AKT also regulates cell survival via the phosphorylation of MAP3K5 (apoptosis signal-related kinase). Phosphorylation of 'Ser-83' decreases MAP3K5 kinase activity stimulated by oxidative stress and thereby prevents apoptosis. AKT mediates insulin-stimulated protein synthesis by phosphorylating TSC2 at 'Ser-939' and 'Thr-1462', thereby activating the mTORC1 signaling pathway, and leading to both phosphorylation of 4E-BP1 and in activation of RPS6KB1. Also regulates the mTORC1 signaling pathway by catalyzing phosphorylation of CASTOR1 and DEPDC5. AKT plays a role as key modulator of the AKT-mTOR signaling pathway controlling the tempo of the process of newborn neurons integration during adult neurogenesis, including correct neuron positioning, dendritic development and synapse formation. Part of a positive feedback loop of mTORC2 signaling by mediating phosphorylation of MAPKAP1/SIN1, promoting mTORC2 activation. AKT is involved in the phosphorylation of members of the FOXO factors (Forkhead family of transcription factors), leading to binding of 14-3-3 proteins and cytoplasmic localization. In particular, FOXO1 is phosphorylated at 'Thr-24', 'Ser-256' and 'Ser-319'. FOXO3 and FOXO4 are phosphorylated on equivalent sites. AKT has an important role in the regulation of NF-kappa-B-dependent gene transcription and positively regulates the activity of CREB1 (cyclic AMP (cAMP)-response element binding protein). The phosphorylation of CREB1 induces the binding of accessory proteins that are necessary for the transcription of pro-survival genes such as BCL2 and MCL1. AKT phosphorylates 'Ser-454' on ATP citrate lyase (ACLY), thereby potentially regulating ACLY activity and fatty acid synthesis. Activates the 3B isoform of cyclic nucleotide phosphodiesterase (PDE3B) via phosphorylation of 'Ser-273', resulting in reduced cyclic AMP levels and inhibition of lipolysis. Phosphorylates PIKFYVE on 'Ser-318', which results in increased PI(3)P-5 activity. The Rho GTPase-activating protein DLC1 is another substrate and its phosphorylation is implicated in the regulation cell proliferation and cell growth. Signals downstream of phosphatidylinositol 3-kinase (PI(3)K) to mediate the effects of various growth factors such as platelet-derived growth factor (PDGF), epidermal growth factor (EGF), insulin and insulin-like growth factor 1 (IGF1). AKT mediates the antiapoptotic effects of IGF1. Essential for the SPATA13-mediated regulation of cell migration and adhesion assembly and disassembly. May be involved in the regulation of the placental development. Phosphorylates STK4/MST1 at 'Thr-120' and 'Thr-387' leading to inhibition of its: kinase activity, nuclear translocation, autophosphorylation and ability to phosphorylate FOXO3. Phosphorylates STK3/MST2 at 'Thr-117' and 'Thr-384' leading to inhibition of its: cleavage, kinase activity, autophosphorylation at Thr-180, binding to RASSF1 and nuclear translocation. Phosphorylates SRPK2 and enhances its kinase activity towards SRSF2 and ACIN1 and promotes its nuclear translocation. Phosphorylates RAF1 at 'Ser-259' and negatively regulates its activity. Phosphorylation of BAD stimulates its pro-apoptotic activity. Phosphorylates KAT6A at 'Thr-369' and this phosphorylation inhibits the interaction of KAT6A with PML and negatively regulates its acetylation activity towards p53/TP53. Phosphorylates palladin (PALLD), modulating cytoskeletal organization and cell motility. Phosphorylates prohibitin (PHB), playing an important role in cell metabolism and proliferation. Phosphorylates CDKN1A, for which phosphorylation at 'Thr-145' induces its release from CDK2 and cytoplasmic relocalization. These recent findings indicate that the AKT1 isoform has a more specific role in cell motility and proliferation. Phosphorylates CLK2 thereby controlling cell survival to ionizing radiation. Phosphorylates PCK1 at 'Ser-90', reducing the binding affinity of PCK1 to oxaloacetate and changing PCK1 into an atypical protein kinase activity using GTP as donor. Also acts as an activator of TMEM175 potassium channel activity in response to growth factors: forms the lysoK(GF) complex together with TMEM175 and acts by promoting TMEM175 channel activation, independently of its protein kinase activity. Acts as a negative regulator of the cGAS-STING pathway by mediating phosphorylation of CGAS during mitosis, leading to its inhibition. Acts as a regulator of mitochondrial calcium uptake by mediating phosphorylation of MICU1 in the mitochondrial intermembrane space, impairing MICU1 maturation. Acts as an inhibitor of tRNA methylation by mediating phosphorylation of the N-terminus of METTL1, thereby inhibiting METTL1 methyltransferase activity. In response to LPAR1 receptor pathway activation, phosphorylates Rabin8/RAB3IP which alters its activity and phosphorylates WDR44 which induces WDR44 binding to Rab11, thereby switching Rab11 vesicular function from preciliary trafficking to endocytic recycling. This Bos taurus (Bovine) protein is RAC-alpha serine/threonine-protein kinase (AKT1).